The sequence spans 170 residues: Zinc finger protein 576 (170 aa).

Residues 1 to 29 (MEDPNPEENMKQQDSPKERSPQSPGGNIC) form a disordered region. A compositionally biased stretch (basic and acidic residues) spans 8–20 (ENMKQQDSPKERS). C2H2-type zinc fingers lie at residues 34–57 (PKCTRCLITFADSKFQERHMKREH), 71–93 (FICFTCARSFPSSKALITHQRSH), 112–134 (FPCPDCGKTFGQAVSLRRHRQMH), and 143–165 (FACTECGQDFAQEAGLHQHYIRH).

The protein belongs to the krueppel C2H2-type zinc-finger protein family.

The protein localises to the nucleus. Functionally, may be involved in transcriptional regulation. The sequence is that of Zinc finger protein 576 (ZNF576) from Homo sapiens (Human).